The following is a 75-amino-acid chain: Small, acid-soluble spore protein Tlp (75 aa).

It belongs to the Tlp family.

Its subcellular location is the spore core. This Geobacillus thermodenitrificans (strain NG80-2) protein is Small, acid-soluble spore protein Tlp.